The primary structure comprises 237 residues: Octopine transport system permease protein OccQ (237 aa).

The 201-residue stretch at 22–222 folds into the ABC transmembrane type-1 domain; that stretch reads TAMTMAVAFS…LITFVSGQVF (201 aa). The next 4 helical transmembrane spans lie at 26–46, 72–92, 96–116, and 202–222; these read MAVA…GAAA, LVIY…ASLF, GFVG…VSGA, and SFYL…GQVF.

This sequence belongs to the binding-protein-dependent transport system permease family. HisMQ subfamily.

Its subcellular location is the cell inner membrane. Its function is as follows. Component of the octopine active transport system probably consisting of four subunits: Q, M, P and T. The sequence is that of Octopine transport system permease protein OccQ (occQ) from Agrobacterium tumefaciens (strain Ach5).